The following is a 322-amino-acid chain: MDTSSINAQSIFDDNAAMLKLSWLTGHEGWERGFSSESVANATSSADLVGHLNLIHPNRIQVLGDAEIDYYKRQTDEDRSRHMAELIALEPPFLVVAGGVAAPPELVLRCTRSSTPLFTTPMSAAAVIDSLRLYMSRILAPRATLHGVFLDILGMGVLLTGDSGLGKSELGLELISRGHGLVADDAVDFVRLGPDFVEGRCPPLLQNLLEVRGLGLLDIKTIFGETAVRRKMKLKLIVQLVRRPDGEFQRLPLESQTVDVLGLPISKVTIQVAAGRNLAVLVEAAVRNTILQLRGIDTLRDFMDRQRLAMQDPDSQFPGKLI.

Active-site residues include H146 and K167. Residue G161 to S168 participates in ATP binding. S168 provides a ligand contact to Mg(2+). D185 functions as the Proton acceptor; for phosphorylation activity. Proton donor; for dephosphorylation activity in the catalytic mechanism. The interval L209–D218 is important for the catalytic mechanism of both phosphorylation and dephosphorylation. E210 provides a ligand contact to Mg(2+). R250 is a catalytic residue. The tract at residues Q271–R276 is important for the catalytic mechanism of dephosphorylation.

This sequence belongs to the HPrK/P family. In terms of assembly, homohexamer. The cofactor is Mg(2+).

The enzyme catalyses [HPr protein]-L-serine + ATP = [HPr protein]-O-phospho-L-serine + ADP + H(+). It carries out the reaction [HPr protein]-O-phospho-L-serine + phosphate + H(+) = [HPr protein]-L-serine + diphosphate. Catalyzes the ATP- as well as the pyrophosphate-dependent phosphorylation of a specific serine residue in HPr, a phosphocarrier protein of the phosphoenolpyruvate-dependent sugar phosphotransferase system (PTS). HprK/P also catalyzes the pyrophosphate-producing, inorganic phosphate-dependent dephosphorylation (phosphorolysis) of seryl-phosphorylated HPr (P-Ser-HPr). The chain is HPr kinase/phosphorylase from Paraburkholderia phytofirmans (strain DSM 17436 / LMG 22146 / PsJN) (Burkholderia phytofirmans).